The chain runs to 113 residues: Large ribosomal subunit protein bL19 (113 aa).

This sequence belongs to the bacterial ribosomal protein bL19 family.

Its function is as follows. This protein is located at the 30S-50S ribosomal subunit interface and may play a role in the structure and function of the aminoacyl-tRNA binding site. This chain is Large ribosomal subunit protein bL19, found in Corynebacterium kroppenstedtii (strain DSM 44385 / JCM 11950 / CIP 105744 / CCUG 35717).